Here is a 39-residue protein sequence, read N- to C-terminus: Photosystem II reaction center protein J (39 aa).

A helical membrane pass occupies residues Leu-9 to Tyr-29.

It belongs to the PsbJ family. In terms of assembly, PSII is composed of 1 copy each of membrane proteins PsbA, PsbB, PsbC, PsbD, PsbE, PsbF, PsbH, PsbI, PsbJ, PsbK, PsbL, PsbM, PsbT, PsbX, PsbY, PsbZ, Psb30/Ycf12, at least 3 peripheral proteins of the oxygen-evolving complex and a large number of cofactors. It forms dimeric complexes.

Its subcellular location is the plastid. The protein localises to the chloroplast thylakoid membrane. In terms of biological role, one of the components of the core complex of photosystem II (PSII). PSII is a light-driven water:plastoquinone oxidoreductase that uses light energy to abstract electrons from H(2)O, generating O(2) and a proton gradient subsequently used for ATP formation. It consists of a core antenna complex that captures photons, and an electron transfer chain that converts photonic excitation into a charge separation. The polypeptide is Photosystem II reaction center protein J (Thalassiosira pseudonana (Marine diatom)).